The following is a 199-amino-acid chain: Pneumococcal vaccine antigen A homolog (199 aa).

The protein localises to the cell surface. In Streptococcus pyogenes serotype M6 (strain ATCC BAA-946 / MGAS10394), this protein is Pneumococcal vaccine antigen A homolog (pvaA).